The following is a 125-amino-acid chain: uncharacterized protein (125 aa).

The protein belongs to the asfivirus B125R family.

This is an uncharacterized protein from African swine fever virus (isolate Pig/Kenya/KEN-50/1950) (ASFV).